The following is a 178-amino-acid chain: ATP-dependent protease subunit HslV (178 aa).

Threonine 7 is an active-site residue. Residues glycine 162, cysteine 165, and threonine 168 each coordinate Na(+).

Belongs to the peptidase T1B family. HslV subfamily. In terms of assembly, a double ring-shaped homohexamer of HslV is capped on each side by a ring-shaped HslU homohexamer. The assembly of the HslU/HslV complex is dependent on binding of ATP.

It is found in the cytoplasm. The catalysed reaction is ATP-dependent cleavage of peptide bonds with broad specificity.. Its activity is regulated as follows. Allosterically activated by HslU binding. Its function is as follows. Protease subunit of a proteasome-like degradation complex believed to be a general protein degrading machinery. In Burkholderia cenocepacia (strain ATCC BAA-245 / DSM 16553 / LMG 16656 / NCTC 13227 / J2315 / CF5610) (Burkholderia cepacia (strain J2315)), this protein is ATP-dependent protease subunit HslV.